The following is a 161-amino-acid chain: Heme transporter hrg-6 (161 aa).

A run of 4 helical transmembrane segments spans residues 13–33, 38–58, 75–95, and 115–135; these read IAYT…YIFA, VALA…YFYL, VLFW…ITAI, and WWST…NAFI.

This sequence belongs to the HRG family.

Its subcellular location is the membrane. Functionally, heme transporter. In Caenorhabditis elegans, this protein is Heme transporter hrg-6 (hrg-6).